Here is an 87-residue protein sequence, read N- to C-terminus: Type 3 secretion system needle filament protein (87 aa).

Belongs to the SctF family. The core secretion machinery of the T3SS is composed of approximately 20 different proteins, including cytoplasmic components, a base, an export apparatus and a needle. This subunit polymerizes and forms the helical needle filament. In Y.enterocolitica E40, the needles are composed of 139 (plus-minus 19) YscF/SctF subunits.

It localises to the secreted. Its subcellular location is the cell surface. With respect to regulation, the secretion and/or polymerization may be controlled by the type III secretion system regulator YopR. Functionally, component of the type III secretion system (T3SS), also called injectisome, which is used to inject bacterial effector proteins into eukaryotic host cells. YscF/SctF forms the external needle filament that protrudes from the bacterial surface. The needle is not sufficient by itself for the formation of a pore allowing translocation of the Yop effectors across the host cell membrane. The protein is Type 3 secretion system needle filament protein of Yersinia enterocolitica.